The sequence spans 448 residues: Probable cytosolic Fe-S cluster assembly factor Bm6838 (448 aa).

8 residues coordinate [4Fe-4S] cluster: Cys27, Cys66, Cys69, Cys72, Cys170, Cys226, Cys370, and Cys374.

Belongs to the NARF family.

Component of the cytosolic iron-sulfur (Fe/S) protein assembly machinery. Required for maturation of extramitochondrial Fe/S proteins. This Brugia malayi (Filarial nematode worm) protein is Probable cytosolic Fe-S cluster assembly factor Bm6838.